Here is a 646-residue protein sequence, read N- to C-terminus: Zinc finger protein 503 (646 aa).

Polar residues predominate over residues 1 to 11 (MSTAPSLSALR). Residues 1-70 (MSTAPSLSAL…PPSDPLRQAN (70 aa)) are disordered. Positions 16-28 (SGGGGGGGGGGGA) are enriched in gly residues. Residues 34-52 (SALSGNSSGPGPGSSPAGS) show a composition bias toward low complexity. Residue Ser-102 is modified to Phosphoserine. Residues 121-332 (SQIGKPDPSP…PSAPTSSSVL (212 aa)) are disordered. Residues 130-139 (PSSKLSSVAS) are compositionally biased toward low complexity. Composition is skewed to gly residues over residues 140-152 (NGGG…GGAA) and 189-205 (GGGG…GGGV). N6-acetyllysine is present on Lys-209. Over residues 217–226 (ATCQPFTPRT) the composition is skewed to polar residues. The segment covering 227–240 (GSPSSSASACSPGG) has biased composition (low complexity). Residues Ser-231 and Ser-237 each carry the phosphoserine modification. The span at 250 to 259 (EGKDDKKDTD) shows a compositional bias: basic and acidic residues. Composition is skewed to gly residues over residues 260-277 (VGGG…GGPT) and 300-315 (GGPG…GGSS). Low complexity predominate over residues 316–330 (GSSSGSGPSAPTSSS). The segment at 514–542 (HICNWVSANGPCDKRFATSEELLSHLRTH) adopts a C2H2-type zinc-finger fold. Omega-N-methylarginine is present on Arg-636.

This sequence belongs to the Elbow/Noc family.

The protein localises to the nucleus. May function as a transcriptional repressor. The chain is Zinc finger protein 503 (ZNF503) from Homo sapiens (Human).